The sequence spans 242 residues: Cysteine-rich venom protein helothermine (242 aa).

The signal sequence occupies residues 1-19 (MILLSLYLCLAAMLHQSEG). Residues 41–169 (DKHNNLRRIV…TYKYYQVCQY (129 aa)) form the SCP domain. Disulfide bonds link cysteine 77-cysteine 155, cysteine 94-cysteine 170, cysteine 150-cysteine 167, cysteine 189-cysteine 196, cysteine 192-cysteine 201, cysteine 205-cysteine 237, cysteine 214-cysteine 231, and cysteine 223-cysteine 235. The 33-residue stretch at 205 to 237 (CKQNDVYNNCPDLKKQVGCGHPIMKDCMATCKC) folds into the ShKT domain.

The protein belongs to the CRISP family. Expressed by the venom gland.

The protein localises to the secreted. Its function is as follows. Alters a variety of ion channel activities, including voltage-gated potassium channels (Kv), voltage-gated calcium channels (L-, N-, and P-type) (Cav) and ryanodine receptors (RyR). Is toxic to mice (causes lethargy, partial paralysis of rear limbs and lowering of body temperature). This chain is Cysteine-rich venom protein helothermine, found in Heloderma horridum horridum (Mexican beaded lizard).